Consider the following 327-residue polypeptide: Tyrosine--tRNA ligase (327 aa).

L-tyrosine is bound at residue Y33. The short motif at 38–46 is the 'HIGH' region element; it reads PSGVLHLGH. 4 residues coordinate L-tyrosine: Y154, Q158, D161, and Q176. A 'KMSKS' region motif is present at residues 212 to 216; sequence KMSSS. Position 215 (S215) interacts with ATP.

Belongs to the class-I aminoacyl-tRNA synthetase family. TyrS type 3 subfamily. As to quaternary structure, homodimer.

It localises to the cytoplasm. It carries out the reaction tRNA(Tyr) + L-tyrosine + ATP = L-tyrosyl-tRNA(Tyr) + AMP + diphosphate + H(+). Catalyzes the attachment of tyrosine to tRNA(Tyr) in a two-step reaction: tyrosine is first activated by ATP to form Tyr-AMP and then transferred to the acceptor end of tRNA(Tyr). In Halobacterium salinarum (strain ATCC 29341 / DSM 671 / R1), this protein is Tyrosine--tRNA ligase.